A 430-amino-acid chain; its full sequence is Putative cytochrome P450 139 (430 aa).

C372 is a binding site for heme.

The protein belongs to the cytochrome P450 family. It depends on heme as a cofactor.

The sequence is that of Putative cytochrome P450 139 (cyp139) from Mycobacterium bovis (strain ATCC BAA-935 / AF2122/97).